The chain runs to 173 residues: Phosphopantetheine adenylyltransferase (173 aa).

A substrate-binding site is contributed by T9. Residues 9 to 10 (TF) and H17 each bind ATP. Substrate contacts are provided by K41, T75, and R89. ATP contacts are provided by residues 90–92 (GLR), E100, and 125–131 (HIYLSSS).

It belongs to the bacterial CoaD family. As to quaternary structure, homohexamer. Mg(2+) serves as cofactor.

It localises to the cytoplasm. It catalyses the reaction (R)-4'-phosphopantetheine + ATP + H(+) = 3'-dephospho-CoA + diphosphate. It participates in cofactor biosynthesis; coenzyme A biosynthesis; CoA from (R)-pantothenate: step 4/5. Its function is as follows. Reversibly transfers an adenylyl group from ATP to 4'-phosphopantetheine, yielding dephospho-CoA (dPCoA) and pyrophosphate. The protein is Phosphopantetheine adenylyltransferase of Methylacidiphilum infernorum (isolate V4) (Methylokorus infernorum (strain V4)).